The chain runs to 67 residues: MKFIMKFIKSNKGQISLEFSLLVMVVVLSAIIVSYYLIKTAIETRNANMDVINQSSNVAEKSLSNVT.

The propeptide occupies 1–13 (MKFIMKFIKSNKG). Positions 14 to 22 (QISLEFSLL) match the QXSXEXXXL motif.

Post-translationally, the N-terminus is cleaved by the prepilin peptidase EppA, which recognizes the class III signal sequence.

The protein localises to the secreted. It is found in the cell surface. The protein resides in the fimbrium. This Methanocaldococcus jannaschii (strain ATCC 43067 / DSM 2661 / JAL-1 / JCM 10045 / NBRC 100440) (Methanococcus jannaschii) protein is Probable pilin MJ1400.